The chain runs to 282 residues: 4-diphosphocytidyl-2-C-methyl-D-erythritol kinase (282 aa).

Lysine 15 is an active-site residue. 98-108 (PMGGGVGGGSS) contributes to the ATP binding site. Aspartate 140 is an active-site residue.

It belongs to the GHMP kinase family. IspE subfamily.

It carries out the reaction 4-CDP-2-C-methyl-D-erythritol + ATP = 4-CDP-2-C-methyl-D-erythritol 2-phosphate + ADP + H(+). It functions in the pathway isoprenoid biosynthesis; isopentenyl diphosphate biosynthesis via DXP pathway; isopentenyl diphosphate from 1-deoxy-D-xylulose 5-phosphate: step 3/6. In terms of biological role, catalyzes the phosphorylation of the position 2 hydroxy group of 4-diphosphocytidyl-2C-methyl-D-erythritol. This is 4-diphosphocytidyl-2-C-methyl-D-erythritol kinase from Azoarcus sp. (strain BH72).